Here is a 905-residue protein sequence, read N- to C-terminus: Toll-like receptor 3 (905 aa).

The N-terminal stretch at 1–25 (MKGCSSYLMYSFGGLLSLWILLVSS) is a signal peptide. Positions 26 to 52 (TNQCTVRYNVADCSHLKLTHIPDDLPS) constitute an LRRNT domain. Topologically, residues 26–705 (TNQCTVRYNV…SCKDSAPFEL (680 aa)) are lumenal. Cysteine 29 and cysteine 38 form a disulfide bridge. Asparagine 53, asparagine 58, and asparagine 71 each carry an N-linked (GlcNAc...) asparagine glycan. LRR repeat units follow at residues 53–74 (NITVLNLTHNQLRRLPPTNFTR), 77–98 (QLAILDAGFNSISKLEPELCQI), 101–122 (LLKVLNLQHNELSQISDQTFVF), 125–146 (NLTELDLMSNSIHKIKSNPFKN), 149–170 (NLIKLDLSHNGLSSTKLGTGVQ), and 173–196 (NLQELLLAKNKILALRSEELEFLG). Cysteine 96 and cysteine 123 form a disulfide bridge. Residue asparagine 125 is glycosylated (N-linked (GlcNAc...) asparagine). Asparagine 197 carries N-linked (GlcNAc...) asparagine glycosylation. An LRR 7 repeat occupies 199–220 (SLRKLDLSSNPLKEFSPGCFQT). 4 N-linked (GlcNAc...) asparagine glycosylation sites follow: asparagine 248, asparagine 253, asparagine 276, and asparagine 292. LRR repeat units follow at residues 250–271 (SIQNLSLANNQLLATSESTFSG), 276–297 (NLTQLDLSYNNLHDVGNGSFSY), 300–321 (SLRYLSLEYNNIQRLSPRSFYG), 324–345 (NLRYLSLKRAFTKQSVSLASHP), 357–378 (YLEYLNMDDNNIPSTKSNTFTG), 381–401 (SLKYLSLSKTFTSLQTLTNET), 409–430 (PLLTLNLTKNHISKIANGTFSW), 433–454 (QLRILDLGLNEIEQKLSGQEWR), 458–479 (NIFEIYLSYNKYLQLSTSSFAL), 482–502 (SLQRLMLRRVALKNVDISPSP), 508–529 (NLTILDLSNNNIANINEDLLEG), 532–553 (NLEILDFQHNNLARLWKRANPG), 564–585 (HLHILNLESNGLDEIPVGVFKN), 588–609 (ELKSINLGLNNLNKLEPFIFDD), and 612–633 (SLRSLNLQKNLITSVEKDVFGP). Residues asparagine 399, asparagine 414, and asparagine 425 are each glycosylated (N-linked (GlcNAc...) asparagine). N-linked (GlcNAc...) asparagine glycosylation is present at asparagine 508. One can recognise an LRRCT domain in the interval 646 to 699 (NPFDCTCESISWFVNWINQTHTNISELSTHYLCNTPHHYYGFPLKLFDTSSCKD). 2 cysteine pairs are disulfide-bonded: cysteine 650–cysteine 678 and cysteine 652–cysteine 697. Residues asparagine 663 and asparagine 668 are each glycosylated (N-linked (GlcNAc...) asparagine). The chain crosses the membrane as a helical span at residues 706 to 726 (LFIISTSMLLVFILVVLLIHI). Topologically, residues 727-905 (EGWRISFYWN…VALGSRNSAH (179 aa)) are cytoplasmic. A TIR domain is found at 755 to 898 (FEYTAYIIHA…AFHHKLQVAL (144 aa)). Tyrosine 760 is subject to Phosphotyrosine. Residues lysine 766, lysine 813, and lysine 832 each participate in a glycyl lysine isopeptide (Lys-Gly) (interchain with G-Cter in ubiquitin) cross-link. Position 859 is a phosphotyrosine (tyrosine 859).

The protein belongs to the Toll-like receptor family. As to quaternary structure, monomer and homodimer; dimerization is triggered by ligand-binding, the signaling unit is composed of one ds-RNA of around 40 bp and two TLR3 molecules, and lateral clustering of signaling units along the length of the ds-RNA ligand is required for TLR3 signal transduction. Interacts (via transmembrane domain) with UNC93B1; the interaction is required for transport from the ER to the endosomes. Interacts with SRC; upon binding of double-stranded RNA. Interacts with TICAM1 (via the TIR domain) in response to poly(I:C) and this interaction is enhanced in the presence of WDFY1. The tyrosine-phosphorylated form (via TIR domain) interacts with WDFY1 (via WD repeat 2) in response to poly(I:C). Ubiquitinated by RNF170 at Lys-766 via 'Lys-48'-linked ubiquitin chains; leading to TLR3 proteasomal degradation. TLR3 signaling requires a proteolytic cleavage mediated by cathepsins CTSB and CTSH, the cleavage occurs between amino acids 252 and 346. The cleaved form of TLR3 is the predominant form found in endosomes. In terms of processing, ubiquitinated by TRIM3; leading to recognition and sorting of polyubiquitinated TLR3 by the ESCRT complexes. Ubiquitinated by ZNRF1 via 'Lys-63'-linked ubiquitin chains; leading to TLR3 lysosomal trafficking and degradation. As to expression, highly expressed in lung. After intraperitoneal injection of lipopolysaccharide, highly expressed in brain, heart, kidney, liver, lung and spleen.

The protein resides in the endoplasmic reticulum membrane. Its subcellular location is the endosome membrane. It is found in the early endosome. In terms of biological role, key component of innate and adaptive immunity. TLRs (Toll-like receptors) control host immune response against pathogens through recognition of molecular patterns specific to microorganisms. TLR3 is a nucleotide-sensing TLR which is activated by double-stranded RNA, a sign of viral infection. Acts via the adapter TRIF/TICAM1, leading to NF-kappa-B activation, IRF3 nuclear translocation, cytokine secretion and the inflammatory response. The protein is Toll-like receptor 3 of Mus musculus (Mouse).